The primary structure comprises 491 residues: Cobyric acid synthase (491 aa).

Residues 250-439 form the GATase cobBQ-type domain; sequence ELNIIVIRLP…LHGIFDNGSW (190 aa). The active-site Nucleophile is the Cys331. His431 is a catalytic residue.

Belongs to the CobB/CobQ family. CobQ subfamily.

It participates in cofactor biosynthesis; adenosylcobalamin biosynthesis. Its function is as follows. Catalyzes amidations at positions B, D, E, and G on adenosylcobyrinic A,C-diamide. NH(2) groups are provided by glutamine, and one molecule of ATP is hydrogenolyzed for each amidation. The sequence is that of Cobyric acid synthase from Microcystis aeruginosa (strain NIES-843 / IAM M-2473).